Reading from the N-terminus, the 122-residue chain is Large ribosomal subunit protein uL14 (122 aa).

The protein belongs to the universal ribosomal protein uL14 family. As to quaternary structure, part of the 50S ribosomal subunit. Forms a cluster with proteins L3 and L19. In the 70S ribosome, L14 and L19 interact and together make contacts with the 16S rRNA in bridges B5 and B8.

In terms of biological role, binds to 23S rRNA. Forms part of two intersubunit bridges in the 70S ribosome. This chain is Large ribosomal subunit protein uL14, found in Sulfurimonas denitrificans (strain ATCC 33889 / DSM 1251) (Thiomicrospira denitrificans (strain ATCC 33889 / DSM 1251)).